The primary structure comprises 293 residues: 4-hydroxy-tetrahydrodipicolinate synthase (293 aa).

Residue Thr-47 participates in pyruvate binding. Catalysis depends on Tyr-135, which acts as the Proton donor/acceptor. Residue Lys-163 is the Schiff-base intermediate with substrate of the active site. Val-205 contributes to the pyruvate binding site.

Belongs to the DapA family. As to quaternary structure, homotetramer; dimer of dimers.

The protein localises to the cytoplasm. The enzyme catalyses L-aspartate 4-semialdehyde + pyruvate = (2S,4S)-4-hydroxy-2,3,4,5-tetrahydrodipicolinate + H2O + H(+). The protein operates within amino-acid biosynthesis; L-lysine biosynthesis via DAP pathway; (S)-tetrahydrodipicolinate from L-aspartate: step 3/4. Its function is as follows. Catalyzes the condensation of (S)-aspartate-beta-semialdehyde [(S)-ASA] and pyruvate to 4-hydroxy-tetrahydrodipicolinate (HTPA). The protein is 4-hydroxy-tetrahydrodipicolinate synthase of Methylibium petroleiphilum (strain ATCC BAA-1232 / LMG 22953 / PM1).